We begin with the raw amino-acid sequence, 428 residues long: Sulfhydrogenase 1 subunit alpha (428 aa).

Ni(2+) contacts are provided by C65, C68, C418, and C421. C68 is a binding site for Fe cation. Position 421 (C421) interacts with Fe cation.

It belongs to the [NiFe]/[NiFeSe] hydrogenase large subunit family. As to quaternary structure, heterotetramer of alpha, beta, gamma and delta subunits. The nickel-containing alpha and delta subunits constitute the hydrogenase activity. The beta and gamma subunits (flavin-containing dimer) constitute the sulfur reductase activity. Ni(2+) is required as a cofactor. Requires Fe cation as cofactor.

It is found in the cytoplasm. It carries out the reaction H2 + NADP(+) = NADPH + H(+). Functionally, part of a bifunctional enzyme complex that functions as an NADPH-dependent hydrogen-evolving hydrogenase with sulfur-reducing activity. May play a role in hydrogen cycling during fermentative growth. Activity not exhibited with NAD. The alpha and delta subunits form the hydrogenase component that catalyzes the reduction of protons to evolve hydrogen. This is Sulfhydrogenase 1 subunit alpha from Pyrococcus furiosus (strain ATCC 43587 / DSM 3638 / JCM 8422 / Vc1).